A 511-amino-acid chain; its full sequence is Frizzled/smoothened-like sans CRD protein C (511 aa).

The N-terminal stretch at 1–25 is a signal peptide; it reads MNQINKFIKNLYLIIITIILIIVIS. Residues 26–93 are Extracellular-facing; sequence NDNNGLFING…QWESYFEMSL (68 aa). A glycan (N-linked (GlcNAc...) asparagine) is linked at Asn51. Residues 94–114 form a helical membrane-spanning segment; the sequence is IMGSISMFASLFLIITYSPLI. At 115-122 the chain is on the cytoplasmic side; sequence NKKHTRHT. Residues 123-143 traverse the membrane as a helical segment; it reads VGILCMSIGIFFVMVSDGRQL. The Extracellular segment spans residues 144-172; that stretch reads WDIESPGEYKKYCPDTGRYARQSDTKCLT. The chain crosses the membrane as a helical span at residues 173–193; it reads TGLFFQFGCVTAIGWWSILAV. The Cytoplasmic segment spans residues 194-209; the sequence is DLWMTIAKKVQTTKKQ. A helical membrane pass occupies residues 210 to 230; that stretch reads LLYYLIGINTVSLILTFGPVV. Topologically, residues 231–253 are extracellular; the sequence is KNQYGFGNAAIGCWMLDLKYQYG. A helical transmembrane segment spans residues 254-274; that stretch reads FFWIPVGICLSVGSVFIGLIF. At 275–295 the chain is on the cytoplasmic side; it reads WEIYKISDAVKKRYLKKHIKP. The helical transmembrane segment at 296–316 threads the bilayer; sequence LCLIVLMCLEFLYMFIYYSYI. Topologically, residues 317–357 are extracellular; that stretch reads TANQPTYNKHVAEYIMCLIINAANVPGSYTCQLKTVSPTAQ. A helical transmembrane segment spans residues 358-378; that stretch reads FLFLIAIRLMGLQGLIFYGLT. The Cytoplasmic segment spans residues 379 to 511; that stretch reads AATKKVWANS…RVNSPDNLQP (133 aa). The segment at 430-511 is disordered; that stretch reads NGYTTGGSDN…RVNSPDNLQP (82 aa). Positions 433 to 443 are enriched in gly residues; the sequence is TTGGSDNGVGS. The span at 451–460 shows a compositional bias: polar residues; it reads KSSSNGGAQD. Residues 461-485 show a composition bias toward low complexity; it reads NNNNNNNNNNNNNNNNNNNNNNNNN. Positions 486-511 are enriched in polar residues; it reads SSSLEISGVESNNSTPRVNSPDNLQP.

This sequence belongs to the G-protein coupled receptor Fz/Smo family.

The protein resides in the membrane. This is Frizzled/smoothened-like sans CRD protein C (fscC) from Dictyostelium discoideum (Social amoeba).